We begin with the raw amino-acid sequence, 245 residues long: Aliphatic sulfonates import ATP-binding protein SsuB 1 (245 aa).

Residues 8–223 form the ABC transporter domain; sequence VSITGLRKSF…ERADPDILRY (216 aa). An ATP-binding site is contributed by 40–47; that stretch reads GPSGTGKT.

It belongs to the ABC transporter superfamily. Aliphatic sulfonates importer (TC 3.A.1.17.2) family. As to quaternary structure, the complex is composed of two ATP-binding proteins (SsuB), two transmembrane proteins (SsuC) and a solute-binding protein (SsuA).

It is found in the cell membrane. It carries out the reaction ATP + H2O + aliphatic sulfonate-[sulfonate-binding protein]Side 1 = ADP + phosphate + aliphatic sulfonateSide 2 + [sulfonate-binding protein]Side 1.. In terms of biological role, part of the ABC transporter complex SsuABC involved in aliphatic sulfonates import. Responsible for energy coupling to the transport system. This is Aliphatic sulfonates import ATP-binding protein SsuB 1 from Nocardia farcinica (strain IFM 10152).